A 237-amino-acid polypeptide reads, in one-letter code: Oil body-associated protein 2C (237 aa).

It belongs to the OBAP family.

In Arabidopsis thaliana (Mouse-ear cress), this protein is Oil body-associated protein 2C.